Consider the following 367-residue polypeptide: Adenosine deaminase (367 aa).

Zn(2+) is bound by residues histidine 46 and histidine 48. A purine D-ribonucleoside-binding positions include 48–50, aspartate 176, and glycine 205; that span reads HLD. The tract at residues 174 to 188 is gating helix loop; regulates binding affinity for substrates and thus substrate selectivity; the sequence is TGDGGLSHERMKEAA. A Zn(2+)-binding site is contributed by histidine 230. The a purine D-ribonucleoside site is built by glutamate 233, histidine 257, and aspartate 314. Residue aspartate 314 participates in Zn(2+) binding.

This sequence belongs to the metallo-dependent hydrolases superfamily. Adenosine and AMP deaminases family. Zn(2+) serves as cofactor.

The catalysed reaction is adenosine + H2O + H(+) = inosine + NH4(+). It catalyses the reaction S-methyl-5'-thioadenosine + H2O + H(+) = S-methyl-5'-thioinosine + NH4(+). It functions in the pathway purine metabolism; purine nucleoside salvage. With respect to regulation, inhibited by coformycin and methylthiocoformycin (MT-coformycin). In terms of biological role, catalyzes the hydrolytic deamination of adenosine to produce inosine. Unlike mammalian adenosine deaminases, also catalyzes the deamination of 5'-methylthioadenosine (MTA), a by-product of polyamine biosynthesis, to produce 5'-methylthioinosine (MTI). Plays an essential role in the purine salvage pathway which allows the parasite to use host cell purines for the synthesis of nucleic acids. In Plasmodium falciparum (isolate 3D7), this protein is Adenosine deaminase.